The chain runs to 149 residues: D-aminoacyl-tRNA deacylase (149 aa).

The Gly-cisPro motif, important for rejection of L-amino acids motif lies at 137–138 (GP).

This sequence belongs to the DTD family. As to quaternary structure, homodimer.

The protein resides in the cytoplasm. The catalysed reaction is glycyl-tRNA(Ala) + H2O = tRNA(Ala) + glycine + H(+). It carries out the reaction a D-aminoacyl-tRNA + H2O = a tRNA + a D-alpha-amino acid + H(+). Its function is as follows. An aminoacyl-tRNA editing enzyme that deacylates mischarged D-aminoacyl-tRNAs. Also deacylates mischarged glycyl-tRNA(Ala), protecting cells against glycine mischarging by AlaRS. Acts via tRNA-based rather than protein-based catalysis; rejects L-amino acids rather than detecting D-amino acids in the active site. By recycling D-aminoacyl-tRNA to D-amino acids and free tRNA molecules, this enzyme counteracts the toxicity associated with the formation of D-aminoacyl-tRNA entities in vivo and helps enforce protein L-homochirality. The polypeptide is D-aminoacyl-tRNA deacylase (Clostridium acetobutylicum (strain ATCC 824 / DSM 792 / JCM 1419 / IAM 19013 / LMG 5710 / NBRC 13948 / NRRL B-527 / VKM B-1787 / 2291 / W)).